The primary structure comprises 199 residues: Holliday junction branch migration complex subunit RuvA (199 aa).

Residues 1 to 64 (MIGRITGILL…EDGHFLYGFA (64 aa)) form a domain I region. The tract at residues 65-143 (SADERAAFRQ…RALPGFGAST (79 aa)) is domain II. The interval 144–152 (VPGAAAQPA) is flexible linker. The domain III stretch occupies residues 152–199 (ADSRSDILNALLALGYSDKEAQSALKAIPPETGVSDGIRQALKLLSKA).

It belongs to the RuvA family. In terms of assembly, homotetramer. Forms an RuvA(8)-RuvB(12)-Holliday junction (HJ) complex. HJ DNA is sandwiched between 2 RuvA tetramers; dsDNA enters through RuvA and exits via RuvB. An RuvB hexamer assembles on each DNA strand where it exits the tetramer. Each RuvB hexamer is contacted by two RuvA subunits (via domain III) on 2 adjacent RuvB subunits; this complex drives branch migration. In the full resolvosome a probable DNA-RuvA(4)-RuvB(12)-RuvC(2) complex forms which resolves the HJ.

The protein localises to the cytoplasm. In terms of biological role, the RuvA-RuvB-RuvC complex processes Holliday junction (HJ) DNA during genetic recombination and DNA repair, while the RuvA-RuvB complex plays an important role in the rescue of blocked DNA replication forks via replication fork reversal (RFR). RuvA specifically binds to HJ cruciform DNA, conferring on it an open structure. The RuvB hexamer acts as an ATP-dependent pump, pulling dsDNA into and through the RuvAB complex. HJ branch migration allows RuvC to scan DNA until it finds its consensus sequence, where it cleaves and resolves the cruciform DNA. This is Holliday junction branch migration complex subunit RuvA from Aromatoleum aromaticum (strain DSM 19018 / LMG 30748 / EbN1) (Azoarcus sp. (strain EbN1)).